The following is a 398-amino-acid chain: Ribosomal RNA small subunit methyltransferase B (398 aa).

S-adenosyl-L-methionine is bound by residues 221–227 (CGGAGLK), Asp-242, Asp-268, and Asp-283. Cys-336 serves as the catalytic Nucleophile.

The protein belongs to the class I-like SAM-binding methyltransferase superfamily. RsmB/NOP family.

It is found in the cytoplasm. The catalysed reaction is cytidine(967) in 16S rRNA + S-adenosyl-L-methionine = 5-methylcytidine(967) in 16S rRNA + S-adenosyl-L-homocysteine + H(+). Specifically methylates the cytosine at position 967 (m5C967) of 16S rRNA. The sequence is that of Ribosomal RNA small subunit methyltransferase B from Thermus thermophilus (strain ATCC 27634 / DSM 579 / HB8).